The primary structure comprises 186 residues: ADP-ribosylation factor-like protein 8B (186 aa).

The note=Mediates targeting to membranes intramembrane region spans 1–19 (MLALISRLLDWFRSLFWKE). GTP contacts are provided by residues 29-35 (QYSGKTT), 71-75 (DIGGQ), and 130-133 (NKRD). Lys141 is covalently cross-linked (Glycyl lysine isopeptide (Lys-Gly) (interchain with G-Cter in ubiquitin)).

Belongs to the small GTPase superfamily. Arf family. As to quaternary structure, interacts with tubulin. Interacts with BORCS5; recruits ARL8B to lysosomes. Interacts with VPS41; the interaction mediates the recruitment of the HOPS complex to lysosomes. Interacts (GTP-bound form) with PLEKHM2 (via RUN domain); the interaction is required to recruit the motor protein kinesin-1 on lysosomes. Interacts (GTP-bound form) with PLEKHM1 (via RUN domain); the interaction is required for PLEKHM1 localization to lysosomes and for ARL8B function in delivery and degradation of endocytic and autophagic cargo in lysosomes. PLEKHM1 and PLEKHM2 compete for interaction with ARL8B. Interacts (GTP-bound form) with RUFY1; the interaction is required for RUFY1 endosomal location. When GTP-bound, interacts with RUFY3 and RUFY4, but not with RUFY1, nor RUFY2. In terms of processing, ubiquitinated at Lys-141 by RNF167, leading to its degradation.

It is found in the late endosome membrane. The protein localises to the lysosome membrane. The protein resides in the cytoplasm. Its subcellular location is the cytoskeleton. It localises to the spindle. It is found in the cell projection. The protein localises to the axon. The protein resides in the synapse. Its subcellular location is the cytolytic granule membrane. It localises to the early endosome membrane. The catalysed reaction is GTP + H2O = GDP + phosphate + H(+). Functionally, small GTPase which cycles between active GTP-bound and inactive GDP-bound states. In its active state, binds to a variety of effector proteins playing a key role in the regulation of lysosomal positioning which is important for nutrient sensing, natural killer cell-mediated cytotoxicity and antigen presentation. Along with its effectors, orchestrates lysosomal transport and fusion. Localizes specifically to lysosomal membranes and mediates anterograde lysosomal motility by recruiting PLEKHM2, which in turn recruits the motor protein kinesin-1 on lysosomes. Required for lysosomal and cytolytic granule exocytosis. Critical factor involved in NK cell-mediated cytotoxicity. Drives the polarization of cytolytic granules and microtubule-organizing centers (MTOCs) toward the immune synapse between effector NK lymphocytes and target cells. In neurons, mediates the anterograde axonal long-range transport of presynaptic lysosome-related vesicles required for presynaptic biogenesis and synaptic function. Also acts as a regulator of endosome to lysosome trafficking pathways of special significance for host defense. Recruits RUFY1 onto early endosomes regulating endosomes to trans-Golgi network proteins retrieval. Regulates cargo trafficking to lysosomes by binding to PLEKHM1 and recruiting the HOPS subunit VPS41, resulting in functional assembly of the HOPS complex on lysosomal membranes. Plays an important role in cargo delivery to lysosomes for antigen presentation and microbial killing. Directs the intersection of CD1d with lipid antigens in lysosomes, and plays a role in intersecting phagosomes with lysosomes to generate phagolysosomes that kill microbes. Involved in the process of MHC II presentation. Regulates the delivery of antigens to lysosomes and the formation of MHC II-peptide complexes through the recruitment of the HOPS complex to lysosomes allowing the fusion of late endosomes to lysosomes. May play a role in chromosome segregation. The protein is ADP-ribosylation factor-like protein 8B (ARL8B) of Bos taurus (Bovine).